We begin with the raw amino-acid sequence, 176 residues long: Small ribosomal subunit protein uS5 (176 aa).

Positions 11 to 74 (LSEVLVDVNR…QAAKKRMMKV (64 aa)) constitute an S5 DRBM domain.

It belongs to the universal ribosomal protein uS5 family. Part of the 30S ribosomal subunit. Contacts proteins S4 and S8.

Its function is as follows. With S4 and S12 plays an important role in translational accuracy. In terms of biological role, located at the back of the 30S subunit body where it stabilizes the conformation of the head with respect to the body. This is Small ribosomal subunit protein uS5 from Rickettsia akari (strain Hartford).